We begin with the raw amino-acid sequence, 520 residues long: Protein root UVB sensitive 4 (520 aa).

2 helical membrane-spanning segments follow: residues 275–295 (IQTVCFDNLGLLLAVLLNMLF) and 301–321 (LQACLPFVLYPIFSTFDLLGI).

Belongs to the RUS1 family.

The protein localises to the membrane. This chain is Protein root UVB sensitive 4, found in Arabidopsis thaliana (Mouse-ear cress).